Reading from the N-terminus, the 169-residue chain is Ribosome maturation factor RimM (169 aa).

The region spanning 92-167 (PKDTYFICDI…YMKIKVVEGL (76 aa)) is the PRC barrel domain.

This sequence belongs to the RimM family. Binds ribosomal protein uS19.

The protein resides in the cytoplasm. Functionally, an accessory protein needed during the final step in the assembly of 30S ribosomal subunit, possibly for assembly of the head region. Essential for efficient processing of 16S rRNA. May be needed both before and after RbfA during the maturation of 16S rRNA. It has affinity for free ribosomal 30S subunits but not for 70S ribosomes. In Caldicellulosiruptor bescii (strain ATCC BAA-1888 / DSM 6725 / KCTC 15123 / Z-1320) (Anaerocellum thermophilum), this protein is Ribosome maturation factor RimM.